Consider the following 442-residue polypeptide: Exodeoxyribonuclease 7 large subunit (442 aa).

It belongs to the XseA family. As to quaternary structure, heterooligomer composed of large and small subunits.

It is found in the cytoplasm. It catalyses the reaction Exonucleolytic cleavage in either 5'- to 3'- or 3'- to 5'-direction to yield nucleoside 5'-phosphates.. Bidirectionally degrades single-stranded DNA into large acid-insoluble oligonucleotides, which are then degraded further into small acid-soluble oligonucleotides. The polypeptide is Exodeoxyribonuclease 7 large subunit (Rickettsia bellii (strain OSU 85-389)).